The following is a 427-amino-acid chain: Serine hydroxymethyltransferase (427 aa).

Residue 120 to 122 participates in (6S)-5,6,7,8-tetrahydrofolate binding; it reads GHI. Lysine 226 is subject to N6-(pyridoxal phosphate)lysine.

It belongs to the SHMT family. In terms of assembly, homodimer. It depends on pyridoxal 5'-phosphate as a cofactor.

It localises to the cytoplasm. Its pathway is amino-acid biosynthesis; glycine biosynthesis; glycine from L-serine: step 1/1. Its function is as follows. Catalyzes the reversible interconversion of serine and glycine with a modified folate serving as the one-carbon carrier. Also exhibits a pteridine-independent aldolase activity toward beta-hydroxyamino acids, producing glycine and aldehydes, via a retro-aldol mechanism. The protein is Serine hydroxymethyltransferase of Pyrococcus furiosus (strain ATCC 43587 / DSM 3638 / JCM 8422 / Vc1).